Reading from the N-terminus, the 103-residue chain is Small ribosomal subunit protein uS10 (103 aa).

This sequence belongs to the universal ribosomal protein uS10 family. Part of the 30S ribosomal subunit.

Involved in the binding of tRNA to the ribosomes. The chain is Small ribosomal subunit protein uS10 from Actinobacillus pleuropneumoniae serotype 5b (strain L20).